We begin with the raw amino-acid sequence, 241 residues long: Homeobox protein TGIF2LX (241 aa).

Disordered stretches follow at residues Met-1–Pro-58 and Lys-125–Ser-207. Residues Glu-10 to Asp-39 are compositionally biased toward polar residues. A DNA-binding region (homeobox; TALE-type) is located at residues Glu-48 to Asp-111.

The protein belongs to the TALE/TGIF homeobox family.

Its subcellular location is the nucleus. Functionally, may have a transcription role in testis. The polypeptide is Homeobox protein TGIF2LX (TGIF2LX) (Pan troglodytes (Chimpanzee)).